The sequence spans 120 residues: Large ribosomal subunit protein uL18 (120 aa).

Belongs to the universal ribosomal protein uL18 family. As to quaternary structure, part of the 50S ribosomal subunit; part of the 5S rRNA/L5/L18/L25 subcomplex. Contacts the 5S and 23S rRNAs.

Functionally, this is one of the proteins that bind and probably mediate the attachment of the 5S RNA into the large ribosomal subunit, where it forms part of the central protuberance. This Staphylococcus saprophyticus subsp. saprophyticus (strain ATCC 15305 / DSM 20229 / NCIMB 8711 / NCTC 7292 / S-41) protein is Large ribosomal subunit protein uL18.